The chain runs to 182 residues: uncharacterized protein (182 aa).

To H.pylori HP0274.

This is an uncharacterized protein from Methanocaldococcus jannaschii (strain ATCC 43067 / DSM 2661 / JAL-1 / JCM 10045 / NBRC 100440) (Methanococcus jannaschii).